The chain runs to 96 residues: Small ribosomal subunit protein bS18 (96 aa).

It belongs to the bacterial ribosomal protein bS18 family. As to quaternary structure, part of the 30S ribosomal subunit. Forms a tight heterodimer with protein bS6.

In terms of biological role, binds as a heterodimer with protein bS6 to the central domain of the 16S rRNA, where it helps stabilize the platform of the 30S subunit. The protein is Small ribosomal subunit protein bS18 of Borreliella afzelii (strain PKo) (Borrelia afzelii).